Reading from the N-terminus, the 259-residue chain is Phosphatidylglycerol--prolipoprotein diacylglyceryl transferase (259 aa).

Transmembrane regions (helical) follow at residues 9-29 (IIFY…VVGI), 55-75 (FITY…VLLY), 92-112 (EGGM…YLFC), and 117-137 (VNFL…LFLG). Arginine 138 contributes to the a 1,2-diacyl-sn-glycero-3-phospho-(1'-sn-glycerol) binding site. 3 helical membrane passes run 172-192 (QLYE…YATF), 201-221 (GLNS…IEIF), and 228-248 (IGFI…MLIL).

Belongs to the Lgt family.

It localises to the cell inner membrane. It carries out the reaction L-cysteinyl-[prolipoprotein] + a 1,2-diacyl-sn-glycero-3-phospho-(1'-sn-glycerol) = an S-1,2-diacyl-sn-glyceryl-L-cysteinyl-[prolipoprotein] + sn-glycerol 1-phosphate + H(+). Its pathway is protein modification; lipoprotein biosynthesis (diacylglyceryl transfer). In terms of biological role, catalyzes the transfer of the diacylglyceryl group from phosphatidylglycerol to the sulfhydryl group of the N-terminal cysteine of a prolipoprotein, the first step in the formation of mature lipoproteins. This Rickettsia akari (strain Hartford) protein is Phosphatidylglycerol--prolipoprotein diacylglyceryl transferase.